Reading from the N-terminus, the 265-residue chain is Apolipoprotein A-I (265 aa).

Residues 1–18 (MKAVVLTLAVLFLTGSQA) form the signal peptide. Repeat copies occupy residues 67 to 88 (LKLV…EHLG) and 89 to 110 (PVAQ…REIN). Positions 67-265 (LKLVDNWDTL…IDEAAKKLTA (199 aa)) are 10 X approximate tandem repeats. Residues 111–121 (KDLEDVRQKTQ) form a 3; half-length repeat. Tandem repeats lie at residues 122-143 (PFLD…QKVE), 144-165 (PLSA…EQVT), 166-187 (PLGE…TQLA), 188-209 (PYSE…EGGS), and 210-231 (ASLA…EKAK). A Methionine sulfoxide modification is found at Met-193. The stretch at 232–242 (PVLEDIHQGLM) is one 9; half-length repeat. Methionine sulfoxide is present on residues Met-242 and Met-244. Residues 243-265 (PMWESFKTGVLNVIDEAAKKLTA) form repeat 10.

It belongs to the apolipoprotein A1/A4/E family. As to quaternary structure, homodimer. Interacts with APOA1BP and CLU. Component of a sperm activating protein complex (SPAP), consisting of APOA1, an immunoglobulin heavy chain, an immunoglobulin light chain and albumin. Interacts with NDRG1. Interacts with SCGB3A2. Interacts with NAXE and YJEFN3. In terms of processing, glycosylated. Palmitoylated. Post-translationally, phosphorylation sites are present in the extracellular medium. In terms of tissue distribution, major protein of plasma HDL, also found in chylomicrons.

It localises to the secreted. In terms of biological role, participates in the reverse transport of cholesterol from tissues to the liver for excretion by promoting cholesterol efflux from tissues and by acting as a cofactor for the lecithin cholesterol acyltransferase (LCAT). As part of the SPAP complex, activates spermatozoa motility. The protein is Apolipoprotein A-I (APOA1) of Tupaia belangeri (Common tree shrew).